The following is a 440-amino-acid chain: 3-phosphoshikimate 1-carboxyvinyltransferase (440 aa).

Lysine 26, serine 27, and arginine 31 together coordinate 3-phosphoshikimate. Lysine 26 is a binding site for phosphoenolpyruvate. Residues glycine 100 and arginine 134 each contribute to the phosphoenolpyruvate site. 3-phosphoshikimate is bound by residues serine 180, serine 181, glutamine 182, serine 208, aspartate 323, asparagine 346, and lysine 350. Glutamine 182 is a binding site for phosphoenolpyruvate. Catalysis depends on aspartate 323, which acts as the Proton acceptor. Residues arginine 354, arginine 398, and lysine 423 each contribute to the phosphoenolpyruvate site.

Belongs to the EPSP synthase family. As to quaternary structure, monomer.

It is found in the cytoplasm. It catalyses the reaction 3-phosphoshikimate + phosphoenolpyruvate = 5-O-(1-carboxyvinyl)-3-phosphoshikimate + phosphate. The protein operates within metabolic intermediate biosynthesis; chorismate biosynthesis; chorismate from D-erythrose 4-phosphate and phosphoenolpyruvate: step 6/7. Catalyzes the transfer of the enolpyruvyl moiety of phosphoenolpyruvate (PEP) to the 5-hydroxyl of shikimate-3-phosphate (S3P) to produce enolpyruvyl shikimate-3-phosphate and inorganic phosphate. The polypeptide is 3-phosphoshikimate 1-carboxyvinyltransferase (Pasteurella multocida (strain Pm70)).